The following is a 686-amino-acid chain: Pollen receptor-like kinase 5 (686 aa).

An N-terminal signal peptide occupies residues Met-1–Ser-39. Over Gln-40 to Leu-283 the chain is Extracellular. Asn-60 carries an N-linked (GlcNAc...) asparagine glycan. LRR repeat units lie at residues Met-112 to Phe-135, Thr-136 to Gly-159, Pro-161 to Leu-184, Pro-185 to Asp-208, and Lys-210 to Met-230. The helical transmembrane segment at Ala-284 to Val-304 threads the bilayer. Over Gln-305–Arg-686 the chain is Cytoplasmic. Positions Asn-328–Pro-339 are enriched in polar residues. Residues Asn-328–Gly-355 form a disordered region. Positions Arg-375–Leu-648 constitute a Protein kinase domain. At Ser-377 the chain carries Phosphoserine. ATP-binding positions include Leu-381–Ser-389 and Lys-403. Phosphoserine occurs at positions 455 and 458. Thr-472 carries the post-translational modification Phosphothreonine. The residue at position 542 (Tyr-542) is a Phosphotyrosine. Ser-545 is modified (phosphoserine).

This sequence belongs to the protein kinase superfamily. Ser/Thr protein kinase family. As to quaternary structure, interacts with the GRI peptide. In terms of tissue distribution, expressed in pollen and/or in flowers. Detected at low levels in leaves.

The protein resides in the cell membrane. The enzyme catalyses L-seryl-[protein] + ATP = O-phospho-L-seryl-[protein] + ADP + H(+). The catalysed reaction is L-threonyl-[protein] + ATP = O-phospho-L-threonyl-[protein] + ADP + H(+). Functionally, receptor-like kinase involved in the control of pollen germination and pollen tube polar growth. The extracellular domain serves as a sensor for peptides derived from GRI. May act as a downstream element for ROS-dependent cell death induced by GRI. The sequence is that of Pollen receptor-like kinase 5 from Arabidopsis thaliana (Mouse-ear cress).